The sequence spans 317 residues: Aspartate carbamoyltransferase catalytic subunit (317 aa).

Residues Arg66 and Thr67 each coordinate carbamoyl phosphate. Lys94 is a binding site for L-aspartate. 3 residues coordinate carbamoyl phosphate: Arg116, His144, and Gln147. L-aspartate contacts are provided by Arg177 and Arg231. The carbamoyl phosphate site is built by Gly272 and Pro273.

It belongs to the aspartate/ornithine carbamoyltransferase superfamily. ATCase family. In terms of assembly, heterododecamer (2C3:3R2) of six catalytic PyrB chains organized as two trimers (C3), and six regulatory PyrI chains organized as three dimers (R2).

The enzyme catalyses carbamoyl phosphate + L-aspartate = N-carbamoyl-L-aspartate + phosphate + H(+). It participates in pyrimidine metabolism; UMP biosynthesis via de novo pathway; (S)-dihydroorotate from bicarbonate: step 2/3. Its function is as follows. Catalyzes the condensation of carbamoyl phosphate and aspartate to form carbamoyl aspartate and inorganic phosphate, the committed step in the de novo pyrimidine nucleotide biosynthesis pathway. The protein is Aspartate carbamoyltransferase catalytic subunit of Nitrobacter winogradskyi (strain ATCC 25391 / DSM 10237 / CIP 104748 / NCIMB 11846 / Nb-255).